Here is a 94-residue protein sequence, read N- to C-terminus: Cell division topological specificity factor (94 aa).

It belongs to the MinE family.

Functionally, prevents the cell division inhibition by proteins MinC and MinD at internal division sites while permitting inhibition at polar sites. This ensures cell division at the proper site by restricting the formation of a division septum at the midpoint of the long axis of the cell. In Hamiltonella defensa subsp. Acyrthosiphon pisum (strain 5AT), this protein is Cell division topological specificity factor.